The sequence spans 109 residues: Phosphoribosyl-ATP pyrophosphatase (109 aa).

It belongs to the PRA-PH family.

The protein resides in the cytoplasm. The enzyme catalyses 1-(5-phospho-beta-D-ribosyl)-ATP + H2O = 1-(5-phospho-beta-D-ribosyl)-5'-AMP + diphosphate + H(+). The protein operates within amino-acid biosynthesis; L-histidine biosynthesis; L-histidine from 5-phospho-alpha-D-ribose 1-diphosphate: step 2/9. The sequence is that of Phosphoribosyl-ATP pyrophosphatase from Azorhizobium caulinodans (strain ATCC 43989 / DSM 5975 / JCM 20966 / LMG 6465 / NBRC 14845 / NCIMB 13405 / ORS 571).